Consider the following 138-residue polypeptide: Putative pre-16S rRNA nuclease (138 aa).

It belongs to the YqgF nuclease family.

It localises to the cytoplasm. Its function is as follows. Could be a nuclease involved in processing of the 5'-end of pre-16S rRNA. The sequence is that of Putative pre-16S rRNA nuclease from Glaesserella parasuis serovar 5 (strain SH0165) (Haemophilus parasuis).